The primary structure comprises 563 residues: Germacrene-A synthase (563 aa).

Mg(2+)-binding residues include D316, D320, D460, T464, and E468. The short motif at 316 to 320 (DDTYD) is the DDXXD motif element.

It belongs to the terpene synthase family. Tpsa subfamily. Requires Mg(2+) as cofactor. Mn(2+) is required as a cofactor. In terms of tissue distribution, high expression in disk florets, moderate expression in ray florets and detected in leaves and stems, but not in roots.

The enzyme catalyses (2E,6E)-farnesyl diphosphate = (+)-(R)-germacrene A + diphosphate. The protein operates within secondary metabolite biosynthesis; terpenoid biosynthesis. Its function is as follows. Sesquiterpene synthase involved in germacrene A biosynthesis. May be involved in the biosynthesis of the sesquiterpene lactone matricine, one of the major active compounds of chamomile flowers. The chain is Germacrene-A synthase from Matricaria chamomilla var. recutita (German chamomile).